A 335-amino-acid polypeptide reads, in one-letter code: Serine protease 42 (335 aa).

The first 24 residues, 1 to 24 (MASGGGSLGLIVFLLLLQPKPCEA), serve as a signal peptide directing secretion. The N-linked (GlcNAc...) asparagine glycan is linked to N67. Residues 79-315 (IMGGVDAEEG…YSKWLIAVVN (237 aa)) form the Peptidase S1 domain. A disulfide bond links C104 and C120. H119 (charge relay system) is an active-site residue. N-linked (GlcNAc...) asparagine glycosylation is present at N140. Catalysis depends on D165, which acts as the Charge relay system. N176 is a glycosylation site (N-linked (GlcNAc...) asparagine). 3 disulfide bridges follow: C199–C273, C232–C253, and C263–C291. The active-site Charge relay system is the S267.

It belongs to the peptidase S1 family. In terms of tissue distribution, testis-specific. Mainly detected in round spermatids at all the eminiferous epithelial stages (at protein level).

The protein localises to the cytoplasm. It localises to the cell membrane. Its function is as follows. Plays a role in spermatogenesis. Involved in germ cell survival during meiosis. Lacks protease activity in vitro. This chain is Serine protease 42, found in Mus musculus (Mouse).